Here is a 776-residue protein sequence, read N- to C-terminus: MAEPRQEFEVMEDHAGTYGLGDRKDQGGYTMHQDQEGDTDAGLKESPLQTPTEDGSEEPGSETSDAKSTPTAEDVTAPLVDEGAPGKQAAAQPHTEIPEGTTAEEAGIGDTPSLEDEAAGHVTQEPESGKVVQEGFLREPGPPGLSHQLMSGMPGAPLLPEGPREATRQPSGTGPEDTEGGRHAPELLKHQLLGDLHQEGPPLKGAGGKERPGSKEEVDEDRDVDESSLQDSPPSKASPAQDGRPPQTAAREATSIPGFPAEGAIPLPVDFLSKVSTEIPASEPDGPSAGRAKGQDAHLEFTFHVEITPNVQKEQAHSEEHLGRAAFPGAPGEGPEARGPSLGEDTKEADLPEPSEKQPAAAPRGKPVSRVPQLKARMVSKSKDGTGSDDKKAKTSTRSSAKTLKNRPCLSPKHPTPGSSDPLIQPSSPAVCPEPPSSPKYVSSVTPRTGSSGAKEMKLKGADGKTKIATPRGAAPPGQKGQANATRIPAKTPPAPKTPPSSATKQVQRRPPPAGPRSERGEPPKSGDRSGYSSPGSPGTPGSRSRTPSLPTPPTREPKKVAVVRTPPKSPSSAKSRLQTAPVPMPDLKNVKSKIGSTENLKHQPGGGKVQIINKKLDLSNVQSKCGSKDNIKHVPGGGSVQIVYKPVDLSKVTSKCGSLGNIHHKPGGGQVEVKSEKLDFKDRVQSKIGSLDNITHVPGGGNKKIETHKLTFRENAKAKTDHGAEIVYKSPVVSGDTSPRHLSNVSSTGSIDMVDSPQLATLADEVSASLAKQGL.

The span at methionine 1–glutamine 26 shows a compositional bias: basic and acidic residues. Residues methionine 1 to valine 591 form a disordered region. Alanine 2 is subject to N-acetylalanine. Phosphotyrosine is present on residues tyrosine 18 and tyrosine 29. Lysine 44 participates in a covalent cross-link: Glycyl lysine isopeptide (Lys-Gly) (interchain with G-Cter in ubiquitin). 2 positions are modified to phosphoserine: serine 46 and serine 61. Over residues serine 61–threonine 71 the composition is skewed to polar residues. Threonine 69, threonine 71, and threonine 111 each carry phosphothreonine. Basic and acidic residues-rich tracts occupy residues glutamate 179–lysine 189 and glycine 207–glutamate 216. Serine 214 carries the phosphoserine modification. Residues glutamate 217–serine 228 show a composition bias toward acidic residues. 2 stretches are compositionally biased toward basic and acidic residues: residues lysine 293–phenylalanine 303 and glutamate 314–glycine 323. The span at arginine 324–proline 340 shows a compositional bias: low complexity. Basic and acidic residues-rich tracts occupy residues glutamate 344–glutamate 356 and lysine 381–alanine 393. Residues lysine 440–serine 452 are compositionally biased toward polar residues. Residues lysine 455–threonine 466 show a composition bias toward basic and acidic residues. Threonine 470 is modified (phosphothreonine). Arginine 472 carries the post-translational modification Omega-N-methylarginine. Lysine 480 carries the N6,N6-dimethyllysine; alternate modification. Residue lysine 480 is modified to N6-acetyllysine; alternate. Phosphothreonine is present on residues threonine 486, threonine 492, and threonine 498. 3 positions are modified to phosphoserine: serine 502, serine 526, and serine 530. Over residues arginine 517 to aspartate 528 the composition is skewed to basic and acidic residues. Residues arginine 529–serine 549 show a composition bias toward low complexity. At tyrosine 532 the chain carries Phosphotyrosine. Phosphoserine occurs at positions 533, 534, and 537. A phosphothreonine mark is found at threonine 540 and threonine 547. Serine 549 bears the Phosphoserine mark. The residue at position 552 (threonine 552) is a Phosphothreonine. Position 560 is an N6-acetyllysine (lysine 560). Threonine 566 carries the phosphothreonine modification. 2 positions are modified to phosphoserine: serine 570 and serine 572. Tau/MAP repeat units follow at residues glutamine 579–lysine 609, valine 610–serine 640, valine 641–glutamine 671, and valine 672–asparagine 703. Residue lysine 589 forms a Glycyl lysine isopeptide (Lys-Gly) (interchain with G-Cter in ubiquitin) linkage. Lysine 594 carries the post-translational modification N6-acetyllysine; alternate. Position 594 is an N6-methyllysine; alternate (lysine 594). Lysine 594 participates in a covalent cross-link: Glycyl lysine isopeptide (Lys-Gly) (interchain with G-Cter in ubiquitin); alternate. Residue serine 597 is modified to Phosphoserine. Residue lysine 602 forms a Glycyl lysine isopeptide (Lys-Gly) (interchain with G-Cter in ubiquitin) linkage. Residue lysine 616 is modified to N6-acetyllysine; alternate. A Glycyl lysine isopeptide (Lys-Gly) (interchain with G-Cter in ubiquitin); alternate cross-link involves residue lysine 616. Serine 620 and serine 624 each carry phosphoserine. At lysine 625 the chain carries N6-acetyllysine. A Phosphoserine modification is found at serine 628. Residue lysine 633 is modified to N6-acetyllysine; alternate. A Glycyl lysine isopeptide (Lys-Gly) (interchain with G-Cter in ubiquitin); alternate cross-link involves residue lysine 633. Serine 640 is subject to Phosphoserine. The residue at position 646 (lysine 646) is an N6,N6-dimethyllysine; alternate. 3 positions are modified to N6-acetyllysine; alternate: lysine 646, lysine 652, and lysine 656. Glycyl lysine isopeptide (Lys-Gly) (interchain with G-Cter in ubiquitin); alternate cross-links involve residues lysine 646, lysine 652, and lysine 656. Serine 659 carries the post-translational modification Phosphoserine. N6-acetyllysine; alternate is present on residues lysine 666, lysine 678, and lysine 682. Glycyl lysine isopeptide (Lys-Gly) (interchain with G-Cter in ubiquitin); alternate cross-links involve residues lysine 666, lysine 678, and lysine 682. An Omega-N-methylarginine modification is found at arginine 684. At serine 687 the chain carries Phosphoserine. A Glycyl lysine isopeptide (Lys-Gly) (interchain with G-Cter in ubiquitin) cross-link involves residue lysine 688. Serine 691 is modified (phosphoserine). Lysine 704 is subject to N6-acetyllysine; alternate. Lysine 704 participates in a covalent cross-link: Glycyl lysine isopeptide (Lys-Gly) (interchain with G-Cter in ubiquitin); alternate. Lysine 710 is covalently cross-linked (Glycyl lysine isopeptide (Lys-Gly) (interchain with G-Cter in ubiquitin)). Lysine 720 carries the post-translational modification N6-acetyllysine; alternate. Residue lysine 720 forms a Glycyl lysine isopeptide (Lys-Gly) (interchain with G-Cter in ubiquitin); alternate linkage. Residue tyrosine 729 is modified to Phosphotyrosine. 2 positions are modified to phosphoserine: serine 731 and serine 735. The tract at residues valine 733–isoleucine 752 is disordered. A compositionally biased stretch (polar residues) spans glycine 736–serine 751. Phosphothreonine is present on threonine 738. Serine 739, serine 744, serine 751, and serine 757 each carry phosphoserine. Threonine 762 is subject to Phosphothreonine.

Interacts with MARK1, MARK2, MARK3 and MARK4. Interacts with SQSTM1 when polyubiquitinated. Interacts with PSMC2 through SQSTM1. Interacts with FKBP4. Binds to CSNK1D. Interacts with SGK1. Interacts with EPM2A; the interaction dephosphorylates MAPT at Ser-396. Interacts with PIN1. Interacts with LRRK2. Interacts with LRP1, leading to endocytosis; this interaction is reduced in the presence of LRPAP1/RAP. In terms of processing, polyubiquitinated. Requires functional TRAF6 and may provoke SQSTM1-dependent degradation by the proteasome. Post-translationally, phosphorylation at various serine and threonine residues in S-P or T-P motifs by proline-directed protein kinases (PDPK1, CDK1, CDK5, GSK3, MAPK) (a few sites per protein in interphase, more in mitosis), and at serine residues in K-X-G-S motifs by MAP/microtubule affinity-regulating kinase (MARK1, MARK2, MARK3 or MARK4), causing detachment from microtubules, and their disassembly. Phosphorylation at Ser-597 by BRSK1 and BRSK2 in neurons affects ability to bind microtubules and plays a role in neuron polarization. Phosphorylated by PHK. Dephosphorylation at several serine and threonine residues by the serine/threonine phosphatase PPP5C. Phosphorylation at Ser-214 by SGK1 mediates microtubule depolymerization and neurite formation in hippocampal neurons.

It is found in the cytoplasm. It localises to the cytosol. The protein resides in the cell membrane. Its subcellular location is the cytoskeleton. The protein localises to the cell projection. It is found in the axon. It localises to the dendrite. Its function is as follows. Promotes microtubule assembly and stability, and might be involved in the establishment and maintenance of neuronal polarity. The C-terminus binds axonal microtubules while the N-terminus binds neural plasma membrane components, suggesting that tau functions as a linker protein between both. Axonal polarity is predetermined by tau localization (in the neuronal cell) in the domain of the cell body defined by the centrosome. The short isoforms allow plasticity of the cytoskeleton whereas the longer isoforms may preferentially play a role in its stabilization. This is Microtubule-associated protein tau (MAPT) from Pan troglodytes (Chimpanzee).